The chain runs to 901 residues: HTH-type transcriptional regulator MalT (901 aa).

39–46 (SPAGYGKT) is an ATP binding site. The HTH luxR-type domain occupies 829–894 (ELIRTSPLTQ…DAVQHAQQLL (66 aa)). Residues 853–872 (NEQIAGELAVAATTIKTHIR) constitute a DNA-binding region (H-T-H motif).

The protein belongs to the MalT family. In terms of assembly, monomer in solution. Oligomerizes to an active state in the presence of the positive effectors ATP and maltotriose.

With respect to regulation, activated by ATP and maltotriose, which are both required for DNA binding. Its function is as follows. Positively regulates the transcription of the maltose regulon whose gene products are responsible for uptake and catabolism of malto-oligosaccharides. Specifically binds to the promoter region of its target genes, recognizing a short DNA motif called the MalT box. In Salmonella choleraesuis (strain SC-B67), this protein is HTH-type transcriptional regulator MalT.